Here is an 897-residue protein sequence, read N- to C-terminus: Putative POM121-like protein 1-like (897 aa).

Over residues methionine 1–threonine 19 the composition is skewed to basic and acidic residues. Disordered regions lie at residues methionine 1–proline 177, isoleucine 211–glutamine 252, glutamate 266–alanine 302, alanine 315–leucine 348, alanine 362–proline 469, aspartate 484–serine 522, alanine 536–serine 612, alanine 642–proline 741, alanine 753–lysine 793, and serine 812–threonine 856. Polar residues predominate over residues leucine 54–histidine 65. The span at threonine 66–threonine 76 shows a compositional bias: low complexity. Composition is skewed to polar residues over residues lysine 77–glycine 89, serine 103–threonine 114, and proline 219–threonine 228. 4 stretches are compositionally biased toward polar residues: residues asparagine 376–arginine 385, serine 417–serine 430, proline 490–threonine 499, and phenylalanine 556–isoleucine 579. The span at threonine 599–serine 612 shows a compositional bias: low complexity. Composition is skewed to polar residues over residues asparagine 650–glycine 676, serine 689–serine 702, proline 762–threonine 771, and phenylalanine 828–serine 849. The chain crosses the membrane as a helical span at residues leucine 877–phenylalanine 897.

It belongs to the POM121 family.

The protein resides in the membrane. The sequence is that of Putative POM121-like protein 1-like from Homo sapiens (Human).